Here is a 450-residue protein sequence, read N- to C-terminus: MHAISSAAPAPSVRLPFYRQLYFQVVFAIIIGVLLGHFQPEYGAAMKPFGDAFIKLIKMIIAPVIFLTIVTGIASMSHLSAVGRVFGKAMAYFLTFSTLALVVGLVVANVMQPGTGMHINVAELDQTAVKGYVSKSHEMTLTGFALDIIPKTLISPFVGDNILQVLLVAVLFGVSLAMVGDAGKPILDFLDGLTKPVFKLVNIVMKAAPIGAFGAMAFTIGKFGLGSLVNLAELVLTFYITSAVFVLVVLGAVARACGFSVLKLIRYLKAELLLVLGTSSSESALPSLMEKMEKAGCSKSVVGLVVPTGYSFNLDGTNIYMTLAALFIAQATDTHLTLGHQIALLLVAMLSSKGAAGVTGAGFITLAATLAVVPEVPVAGMALILGVDRFMSECRSLTNFIGNAVATVVVSRWENALDADRLHRVLDGEAEFLPEPERAVEPVVLARHRA.

8 helical membrane passes run 25 to 45 (VVFA…YGAA), 56 to 76 (LIKM…IASM), 90 to 110 (MAYF…VANV), 162 to 182 (ILQV…VGDA), 200 to 220 (LVNI…AFTI), 234 to 254 (LVLT…GAVA), 319 to 339 (IYMT…LTLG), and 367 to 387 (AATL…ILGV).

It belongs to the dicarboxylate/amino acid:cation symporter (DAACS) (TC 2.A.23) family.

It is found in the cell inner membrane. Responsible for the transport of dicarboxylates such as succinate, fumarate, and malate from the periplasm across the membrane. The chain is C4-dicarboxylate transport protein from Acidovorax ebreus (strain TPSY) (Diaphorobacter sp. (strain TPSY)).